We begin with the raw amino-acid sequence, 756 residues long: Polyribonucleotide nucleotidyltransferase (756 aa).

Residues aspartate 527 and aspartate 533 each contribute to the Mg(2+) site. Residues 593–652 (PRITTIKVPVDKIGEVIGPKGKMINSITEETGASISIEDDGTVFVGASNGEAAQAAIDKI) enclose the KH domain. One can recognise an S1 motif domain in the interval 664-733 (GERFLGTVVK…NRGKISLVLV (70 aa)).

It belongs to the polyribonucleotide nucleotidyltransferase family. Mg(2+) serves as cofactor.

Its subcellular location is the cytoplasm. The enzyme catalyses RNA(n+1) + phosphate = RNA(n) + a ribonucleoside 5'-diphosphate. Involved in mRNA degradation. Catalyzes the phosphorolysis of single-stranded polyribonucleotides processively in the 3'- to 5'-direction. The polypeptide is Polyribonucleotide nucleotidyltransferase (Mycolicibacterium gilvum (strain PYR-GCK) (Mycobacterium gilvum (strain PYR-GCK))).